Here is a 1181-residue protein sequence, read N- to C-terminus: HEAT repeat-containing protein 6 (1181 aa).

The HEAT 1 repeat unit spans residues 159–198 (LELLGETGLLMKLSDLAQSDPEVRRAAVHCMANLCLSVPG). Disordered regions lie at residues 294–347 (DGRT…PVTG) and 371–407 (LDGS…AEGG). Residues 300–312 (KPQQSESSASRPT) show a composition bias toward polar residues. Residues 313 to 325 (LNKKKKSKVKPKK) are compositionally biased toward basic residues. Ser336, Ser337, Ser399, and Ser402 each carry phosphoserine. The segment covering 383–399 (SSPFSSSSWKRVSSSES) has biased composition (low complexity). HEAT repeat units follow at residues 452-490 (ELGS…GSKQ), 514-552 (SSIR…DAPY), and 558-595 (SLLT…THAP). The disordered stretch occupies residues 613–648 (NSNSATPHLSPPDWWKKAPAGPSLEETSVSSPKGSS). At Thr618 the chain carries Phosphothreonine. Polar residues predominate over residues 637 to 646 (EETSVSSPKG). A Phosphoserine modification is found at Ser643.

In Pongo abelii (Sumatran orangutan), this protein is HEAT repeat-containing protein 6 (HEATR6).